We begin with the raw amino-acid sequence, 129 residues long: Glutaredoxin-like protein ECU08_1380 (129 aa).

Residues 26 to 126 (EADYGEMVRR…PLLTQNREPV (101 aa)) enclose the Glutaredoxin domain.

The protein belongs to the glutaredoxin family.

Its subcellular location is the cytoplasm. Has a glutathione-disulfide oxidoreductase activity in the presence of NADPH and glutathione reductase. Reduces low molecular weight disulfides and proteins. The protein is Glutaredoxin-like protein ECU08_1380 of Encephalitozoon cuniculi (strain GB-M1) (Microsporidian parasite).